The primary structure comprises 129 residues: Large ribosomal subunit protein bL12 (129 aa).

This sequence belongs to the bacterial ribosomal protein bL12 family. Homodimer. Part of the ribosomal stalk of the 50S ribosomal subunit. Forms a multimeric L10(L12)X complex, where L10 forms an elongated spine to which 2 to 4 L12 dimers bind in a sequential fashion. Binds GTP-bound translation factors.

In terms of biological role, forms part of the ribosomal stalk which helps the ribosome interact with GTP-bound translation factors. Is thus essential for accurate translation. The sequence is that of Large ribosomal subunit protein bL12 from Thermosipho melanesiensis (strain DSM 12029 / CIP 104789 / BI429).